Consider the following 68-residue polypeptide: Protein SlyX homolog (68 aa).

Belongs to the SlyX family.

In Pseudomonas entomophila (strain L48), this protein is Protein SlyX homolog.